A 457-amino-acid polypeptide reads, in one-letter code: Autophagy-related protein 14 (457 aa).

Residues 31 to 109 are a coiled coil; the sequence is RIENVMALIE…TRRAALSRRK (79 aa). Disordered regions lie at residues 54–73, 252–274, and 433–457; these read ETNA…QRTA, PSQA…VSRP, and NKNL…VKNR. A compositionally biased stretch (low complexity) spans 253–266; that stretch reads SQASVSSPSSTTDT.

It belongs to the ATG14 family. In terms of assembly, component of the autophagy-specific VPS34 PI3-kinase complex I.

The protein localises to the preautophagosomal structure membrane. The protein resides in the vacuole membrane. Its function is as follows. Required for cytoplasm to vacuole transport (Cvt) and autophagy as a part of the autophagy-specific VPS34 PI3-kinase complex I. This complex is essential to recruit the ATG8-phosphatidylinositol conjugate and the ATG12-ATG5 conjugate to the pre-autophagosomal structure. ATG14 mediates the specific binding of the VPS34 PI3-kinase complex I to the preautophagosomal structure (PAS). Autophagy is required for proper vegetative growth, asexual/sexual reproduction, and full virulence. Autophagy is particularly involved in the biosynthesis of deoxynivalenol (DON), an important virulence determinant. This Gibberella zeae (strain ATCC MYA-4620 / CBS 123657 / FGSC 9075 / NRRL 31084 / PH-1) (Wheat head blight fungus) protein is Autophagy-related protein 14.